An 83-amino-acid polypeptide reads, in one-letter code: U-actitoxin-Avd8d (83 aa).

Positions 1–19 are cleaved as a signal peptide; the sequence is MASTRLFVLLVIGTVLLCQ. A propeptide spanning residues 20 to 38 is cleaved from the precursor; sequence VSGFLDELLAEHELPQDMT.

The protein belongs to the sea anemone 8 toxin family.

It is found in the secreted. Its subcellular location is the nematocyst. The protein is U-actitoxin-Avd8d of Anemonia viridis (Snakelocks anemone).